Consider the following 946-residue polypeptide: Bifunctional lysine-specific demethylase and histidyl-hydroxylase NO66 (946 aa).

The disordered stretch occupies residues 14–435 (YRGSATSKNY…TSAASKKNTV (422 aa)). Polar residues-rich tracts occupy residues 17 to 28 (SATSKNYVQKGT) and 37 to 46 (AKNNNRNLAS). A compositionally biased stretch (low complexity) spans 59 to 73 (SGSYSDGDNGSSSSS). Positions 99-110 (TLNNHSSQSSPE) are enriched in polar residues. The span at 117–128 (ESLKRRNDEAEG) shows a compositional bias: basic and acidic residues. A compositionally biased stretch (polar residues) spans 169 to 186 (TLNSHSSQSSPETPANTR). The span at 187 to 198 (ESLKRRTDEAEG) shows a compositional bias: basic and acidic residues. A compositionally biased stretch (polar residues) spans 239 to 256 (TLNSHSYQSSPETPANTR). Positions 257–268 (ESLKRRTDEAEG) are enriched in basic and acidic residues. Position 309 is a phosphothreonine (Thr309). A compositionally biased stretch (polar residues) spans 309-327 (TLNSHSSQSSPETPANTRE). A compositionally biased stretch (basic and acidic residues) spans 328-338 (SLNRRNYEAEG). Ser339 carries the phosphoserine modification. Positions 379–397 (TLNSHSSQSSPETPANTRE) are enriched in polar residues. The span at 398 to 408 (SLNRRNYEAEG) shows a compositional bias: basic and acidic residues. Residues 416-433 (RTSSTPVGQSTSAASKKN) are compositionally biased toward polar residues. Residues 606 to 742 (NPSSYLVQLR…NLMEKLMPLV (137 aa)) enclose the JmjC domain. Fe cation-binding residues include His646, Asp648, and His708.

Belongs to the ROX family. NO66 subfamily. Fe(2+) serves as cofactor.

It localises to the nucleus. The catalysed reaction is N(6),N(6)-dimethyl-L-lysyl(36)-[histone H3] + 2 2-oxoglutarate + 2 O2 = L-lysyl(36)-[histone H3] + 2 formaldehyde + 2 succinate + 2 CO2. Oxygenase that can act as both a histone lysine demethylase and a ribosomal histidine hydroxylase. Specifically demethylates 'Lys-4' (H3K4me) and 'Lys-36' (H3K36me) of histone H3, thereby playing a central role in histone code. The chain is Bifunctional lysine-specific demethylase and histidyl-hydroxylase NO66 from Drosophila pseudoobscura pseudoobscura (Fruit fly).